The following is a 135-amino-acid chain: Large ribosomal subunit protein mL54 (135 aa).

Belongs to the mitochondrion-specific ribosomal protein mL54 family. In terms of assembly, component of the mitochondrial ribosome large subunit (39S) which comprises a 16S rRNA and about 50 distinct proteins.

Its subcellular location is the mitochondrion. This Danio rerio (Zebrafish) protein is Large ribosomal subunit protein mL54 (mrpl54).